A 213-amino-acid chain; its full sequence is Adenylyl-sulfate kinase (213 aa).

The span at 1 to 17 shows a compositional bias: basic and acidic residues; the sequence is MPAHQLDDHNQETRSDD. Residues 1–20 are disordered; sequence MPAHQLDDHNQETRSDDENI. ATP is bound at residue 47–54; that stretch reads GLSGSGKS. The active-site Phosphoserine intermediate is the Ser121.

Belongs to the APS kinase family.

The catalysed reaction is adenosine 5'-phosphosulfate + ATP = 3'-phosphoadenylyl sulfate + ADP + H(+). It functions in the pathway sulfur metabolism; hydrogen sulfide biosynthesis; sulfite from sulfate: step 2/3. In terms of biological role, catalyzes the synthesis of activated sulfate. In Yersinia pestis, this protein is Adenylyl-sulfate kinase.